A 63-amino-acid polypeptide reads, in one-letter code: H/ACA ribonucleoprotein complex subunit 3-like protein (63 aa).

Residues 18–40 (KMDPEGKPTLSAHPARFSPDDKY) are disordered.

Belongs to the NOP10 family. Component of the small nucleolar ribonucleoprotein particles containing H/ACA-type snoRNAs (H/ACA snoRNPs).

It is found in the nucleus. The protein localises to the nucleolus. Its function is as follows. Required for ribosome biogenesis. Part of a complex which catalyzes pseudouridylation of rRNA. This involves the isomerization of uridine such that the ribose is subsequently attached to C5, instead of the normal N1. Pseudouridine ('psi') residues may serve to stabilize the conformation of rRNAs. This chain is H/ACA ribonucleoprotein complex subunit 3-like protein, found in Trypanosoma cruzi.